A 185-amino-acid polypeptide reads, in one-letter code: uncharacterized protein (185 aa).

The segment at 160–185 (QYTGPAVPSVPTTNLNDIGDPTKTVQ) is disordered.

This is an uncharacterized protein from Saccharomyces cerevisiae (strain ATCC 204508 / S288c) (Baker's yeast).